The chain runs to 469 residues: Lipase A (469 aa).

The first 22 residues, 1–22 (MMFLTQLVSALFLFFLGPISYG), serve as a signal peptide directing secretion. The segment covering 40-51 (PSEDPFYQPPPG) has biased composition (pro residues). A disordered region spans residues 40 to 59 (PSEDPFYQPPPGYEETEPGT). The N-linked (GlcNAc...) asparagine glycan is linked to Asn-111. A disulfide bond links Cys-129 and Cys-304. Residues Ser-217, Asp-361, and His-393 each act as charge relay system in the active site. A disulfide bridge connects residues Cys-377 and Cys-421.

Belongs to the AB hydrolase superfamily. Lipase family. Class Lip subfamily. As to quaternary structure, monomer.

It localises to the secreted. The catalysed reaction is a triacylglycerol + H2O = a diacylglycerol + a fatty acid + H(+). Its function is as follows. Hydrolyzes triglycerides, with a preference for substrates with short-chain lengths (C4 to C8). In Arthroderma benhamiae (strain ATCC MYA-4681 / CBS 112371) (Trichophyton mentagrophytes), this protein is Lipase A.